A 413-amino-acid chain; its full sequence is Aspartate kinase (413 aa).

ACT domains follow at residues 267–341 (LTIR…GDTK) and 347–413 (IVGV…RQGE).

It belongs to the aspartokinase family. Homotrimer. In the presence of inhibitory amino acids the Stokes radius of the protein increases, suggesting its oligomeric state may change.

It is found in the cytoplasm. It carries out the reaction L-aspartate + ATP = 4-phospho-L-aspartate + ADP. It participates in amino-acid biosynthesis; L-lysine biosynthesis via DAP pathway; (S)-tetrahydrodipicolinate from L-aspartate: step 1/4. It functions in the pathway amino-acid biosynthesis; L-methionine biosynthesis via de novo pathway; L-homoserine from L-aspartate: step 1/3. Its pathway is amino-acid biosynthesis; L-threonine biosynthesis; L-threonine from L-aspartate: step 1/5. Activated by L-lysine, L-methionine, and L-isoleucine. L-threonine, at low concentrations, is a mild activator and has a weak inhibitory effect only at concentrations over 10 mM. Strongly feedback inhibited by the concerted combination of L-lysine and L-threonine and slightly feedback inhibited by the concerted combination of L-threonine and L-methionine. Activated by the combination of L-methionine and L-lysine, L-methionine and L-isoleucine and L-lysine and L-isoleucine. Functionally, involved in the biosynthesis of L-aspartate-beta-semialdehyde which is a central intermediate in the biosynthesis of different amino acids (L-lysine, L-methionine, L-threonine). Catalyzes the phosphorylation of the beta-carboxyl group of L-aspartate to yield 4-phospho-L-aspartate. The polypeptide is Aspartate kinase (Pseudomonas fluorescens (strain SBW25)).